We begin with the raw amino-acid sequence, 667 residues long: Homeobox protein 3 (667 aa).

Disordered stretches follow at residues 44–108 (FFQP…NSSI), 179–232 (NNNN…TVYN), 249–268 (NNNN…VNNN), and 331–418 (STNK…YQKQ). Pro residues predominate over residues 52–63 (LPPPTNQQPQPQ). Residues 75-96 (CNSSFENSPQQPTSPLLISSQT) are compositionally biased toward polar residues. The span at 97–108 (SYPSDLSSNSSI) shows a compositional bias: low complexity. The span at 334–343 (KRMKISHHSH) shows a compositional bias: basic residues. Residues 344-379 (SLSNNNENSLSQPYFNNNNNNNNENENVYNIVNEQN) show a composition bias toward low complexity. The segment covering 380–390 (PTFNPNQSNTH) has biased composition (polar residues). Positions 386 to 454 (QSNTHQQQEE…ENENVICSEF (69 aa)) form a coiled coil. Positions 602–664 (EFKSRRILSE…NKRMRDKSNK (63 aa)) form a DNA-binding region, homeobox.

It is found in the nucleus. Putative transcription factor. This chain is Homeobox protein 3 (hbx3), found in Dictyostelium discoideum (Social amoeba).